We begin with the raw amino-acid sequence, 935 residues long: Phosphoenolpyruvate carboxylase (935 aa).

Residues histidine 161 and lysine 593 contribute to the active site.

The protein belongs to the PEPCase type 1 family. Mg(2+) is required as a cofactor.

The catalysed reaction is oxaloacetate + phosphate = phosphoenolpyruvate + hydrogencarbonate. In terms of biological role, forms oxaloacetate, a four-carbon dicarboxylic acid source for the tricarboxylic acid cycle. This Mycolicibacterium paratuberculosis (strain ATCC BAA-968 / K-10) (Mycobacterium paratuberculosis) protein is Phosphoenolpyruvate carboxylase.